Consider the following 125-residue polypeptide: Translation initiation factor 5A (125 aa).

At K36 the chain carries Hypusine.

The protein belongs to the eIF-5A family.

Its subcellular location is the cytoplasm. In terms of biological role, functions by promoting the formation of the first peptide bond. The chain is Translation initiation factor 5A (eIF5A) from Halorubrum lacusprofundi (strain ATCC 49239 / DSM 5036 / JCM 8891 / ACAM 34).